The primary structure comprises 481 residues: ATP synthase subunit beta, chloroplastic (481 aa).

Residue 162 to 169 (GGAGVGKT) participates in ATP binding.

Belongs to the ATPase alpha/beta chains family. In terms of assembly, F-type ATPases have 2 components, CF(1) - the catalytic core - and CF(0) - the membrane proton channel. CF(1) has five subunits: alpha(3), beta(3), gamma(1), delta(1), epsilon(1). CF(0) has four main subunits: a(1), b(1), b'(1) and c(9-12).

It is found in the plastid. It localises to the chloroplast thylakoid membrane. It carries out the reaction ATP + H2O + 4 H(+)(in) = ADP + phosphate + 5 H(+)(out). In terms of biological role, produces ATP from ADP in the presence of a proton gradient across the membrane. The catalytic sites are hosted primarily by the beta subunits. This is ATP synthase subunit beta, chloroplastic from Chlorella vulgaris (Green alga).